The chain runs to 256 residues: Polycomb group RING finger protein 5 (256 aa).

The RING-type zinc-finger motif lies at 18–57 (CYICKGYLIKPTTVTECLHTFCKTCIVQHFEDSNDCPRCG). 2 stretches are compositionally biased toward basic and acidic residues: residues 94–103 (ESEFWKKNKP) and 110–120 (DTSKADKPKVD). Residues 94 to 133 (ESEFWKKNKPQENGQDDTSKADKPKVDEEGDENEDDKDYH) are disordered.

As to quaternary structure, component of a PRC1-like complex that contains PCGF5, RNF2 and UBE2D3. Interacts with RNF2; the interaction is direct. Interacts with CBX6, CBX7 and CBX8. Interacts with AUTS2; the interaction is direct. Identified in a complex that contains AUTS2, PCGF5, CSNK2B and RNF2.

It localises to the nucleus. The protein localises to the nucleoplasm. Functionally, component of a Polycomb group (PcG) multiprotein PRC1-like complex, a complex class required to maintain the transcriptionally repressive state of many genes, including Hox genes, throughout development. PcG PRC1 complex acts via chromatin remodeling and modification of histones; it mediates monoubiquitination of histone H2A 'Lys-119', rendering chromatin heritably changed in its expressibility. Within the PRC1-like complex, regulates RNF2 ubiquitin ligase activity. Plays a redundant role with PCGF3 as part of a PRC1-like complex that mediates monoubiquitination of histone H2A 'Lys-119' on the X chromosome and is required for normal silencing of one copy of the X chromosome in XX females. This is Polycomb group RING finger protein 5 (PCGF5) from Homo sapiens (Human).